The chain runs to 199 residues: MIARDDVTGLILAGGRGSRMGGTDKGLQPLHGTPMAMHTMMRLTPQVGGLMINANRNLAAYESFGVPVYTDSVPDFAGPLAGMLAGLEQCATPWMVTAPCDSPFLPTDLVARLAQAIEAEGAELAIPVTLDPDGRRQTQPVFCLMPVSALDSLVAYLSGGGRKIETWAASHRLAEVLFDDAAAFANINTLDELRAHEAR.

Residues 12 to 14 (LAG), lysine 25, asparagine 53, aspartate 71, and aspartate 101 contribute to the GTP site. Residue aspartate 101 coordinates Mg(2+).

The protein belongs to the MobA family. As to quaternary structure, monomer. The cofactor is Mg(2+).

It localises to the cytoplasm. It carries out the reaction Mo-molybdopterin + GTP + H(+) = Mo-molybdopterin guanine dinucleotide + diphosphate. Its function is as follows. Transfers a GMP moiety from GTP to Mo-molybdopterin (Mo-MPT) cofactor (Moco or molybdenum cofactor) to form Mo-molybdopterin guanine dinucleotide (Mo-MGD) cofactor. This is Molybdenum cofactor guanylyltransferase from Cupriavidus taiwanensis (strain DSM 17343 / BCRC 17206 / CCUG 44338 / CIP 107171 / LMG 19424 / R1) (Ralstonia taiwanensis (strain LMG 19424)).